Consider the following 130-residue polypeptide: Small ribosomal subunit protein uS9 (130 aa).

The protein belongs to the universal ribosomal protein uS9 family.

This Shigella dysenteriae serotype 1 (strain Sd197) protein is Small ribosomal subunit protein uS9.